The primary structure comprises 81 residues: Photosystem I iron-sulfur center (81 aa).

4Fe-4S ferredoxin-type domains are found at residues 2–31 and 39–68; these read SHSVKIYDTCIGCTQCVRACPTDVLEMIPW and IASAPRTEDCVGCKRCESACPTDFLSVRVY. The [4Fe-4S] cluster site is built by cysteine 11, cysteine 14, cysteine 17, cysteine 21, cysteine 48, cysteine 51, cysteine 54, and cysteine 58.

The eukaryotic PSI reaction center is composed of at least 11 subunits. [4Fe-4S] cluster serves as cofactor.

It localises to the plastid. The protein resides in the chloroplast thylakoid membrane. It carries out the reaction reduced [plastocyanin] + hnu + oxidized [2Fe-2S]-[ferredoxin] = oxidized [plastocyanin] + reduced [2Fe-2S]-[ferredoxin]. In terms of biological role, apoprotein for the two 4Fe-4S centers FA and FB of photosystem I (PSI); essential for photochemical activity. FB is the terminal electron acceptor of PSI, donating electrons to ferredoxin. The C-terminus interacts with PsaA/B/D and helps assemble the protein into the PSI complex. Required for binding of PsaD and PsaE to PSI. PSI is a plastocyanin-ferredoxin oxidoreductase, converting photonic excitation into a charge separation, which transfers an electron from the donor P700 chlorophyll pair to the spectroscopically characterized acceptors A0, A1, FX, FA and FB in turn. The polypeptide is Photosystem I iron-sulfur center (Spinacia oleracea (Spinach)).